The sequence spans 369 residues: Replication factor C subunit 5 (369 aa).

The interval 21 to 40 is disordered; it reads INKGKDVVGFGPPPQSKATP. 79-86 contacts ATP; that stretch reads GPPGTGKT.

The protein belongs to the activator 1 small subunits family. In terms of assembly, heterotetramer of subunits RFC2, RFC3, RFC4 and RFC5 that can form a complex with RFC1.

It is found in the nucleus. In terms of biological role, functions in cell replication and proliferation. May be involved in chromatin assembly and remodeling. Plays a role in the negative control of pathogenesis-related gene expression and systemic acquired resistance (SAR). This is Replication factor C subunit 5 (RFC5) from Arabidopsis thaliana (Mouse-ear cress).